Here is a 298-residue protein sequence, read N- to C-terminus: Protease HtpX homolog (298 aa).

The next 2 helical transmembrane spans lie at 16–36 (VMFG…YLFW) and 38–58 (SWVS…LIMI). Residue histidine 144 coordinates Zn(2+). Glutamate 145 is a catalytic residue. Zn(2+) is bound at residue histidine 148. 2 helical membrane-spanning segments follow: residues 159-179 (IALA…NWFW) and 197-217 (IIGL…ASIA). Glutamate 226 serves as a coordination point for Zn(2+).

It belongs to the peptidase M48B family. Zn(2+) is required as a cofactor.

The protein localises to the cell membrane. This Levilactobacillus brevis (strain ATCC 367 / BCRC 12310 / CIP 105137 / JCM 1170 / LMG 11437 / NCIMB 947 / NCTC 947) (Lactobacillus brevis) protein is Protease HtpX homolog.